A 312-amino-acid chain; its full sequence is NAD(P)(+)--arginine ADP-ribosyltransferase 1 (312 aa).

Residues 1–20 form the signal peptide; that stretch reads MELLALRWVLLAGTLLSTSA. A propeptide spanning residues 21–31 is cleaved from the precursor; sequence ASSALQEGDLG. 2 disulfides stabilise this stretch: C51-C260 and C159-C208. In terms of domain architecture, TR mART core spans 71–256; it reads IAYAVTWRQA…IQLHSKGKMS (186 aa). Residues Y108, R164, and Q183 each coordinate NAD(+). R164 is an active-site residue. The active site involves S186. Residue S217 participates in NAD(+) binding. The active site involves E224. The propeptide occupies 267–312; it reads GGQWGRGHQEVGLGLSPGLSLPVLPCRRRVWEGLGHREGDPIPAAV.

Belongs to the Arg-specific ADP-ribosyltransferase family.

The protein localises to the secreted. It is found in the extracellular space. It catalyses the reaction L-arginyl-[protein] + NAD(+) = N(omega)-(ADP-D-ribosyl)-L-arginyl-[protein] + nicotinamide + H(+). In Gallus gallus (Chicken), this protein is NAD(P)(+)--arginine ADP-ribosyltransferase 1.